We begin with the raw amino-acid sequence, 369 residues long: CASP-like protein 4U1 (369 aa).

A disordered region spans residues 1–162; sequence MASTPRTPAP…RAETKLPLSS (162 aa). Residues 1–222 lie on the Cytoplasmic side of the membrane; that stretch reads MASTPRTPAP…AVAAVAERRE (222 aa). The span at 7–23 shows a compositional bias: pro residues; that stretch reads TPAPERSPPPVPTPPPP. Residues 36–51 are compositionally biased toward basic and acidic residues; that stretch reads SPREEASFSSDGREGA. Composition is skewed to low complexity over residues 87-96 and 114-127; these read ANKAAAATAE and SSQTSPATTNSPTP. The chain crosses the membrane as a helical span at residues 223–243; that stretch reads LLLALRLATAVLSLAAFSVIA. Residues 244–262 are Extracellular-facing; that stretch reads SARTSGWAGDYYARHLQYR. A helical transmembrane segment spans residues 263–283; the sequence is YAVAVNVIVFAYSVAQSLGKI. Over 284-300 the chain is Cytoplasmic; that stretch reads RHLVSPRFTFRTMSSYY. The helical transmembrane segment at 301 to 321 threads the bilayer; it reads CSLFLDQVLAYLLMSASSAAA. The Extracellular portion of the chain corresponds to 322–339; the sequence is SRNDLWVSRFGTDAFVRK. A helical transmembrane segment spans residues 340–360; it reads ITGALWLSFVAFLVLALNAVI. Residues 361 to 369 are Cytoplasmic-facing; sequence SXANLFSMV.

This sequence belongs to the Casparian strip membrane proteins (CASP) family. Homodimer and heterodimers.

The protein resides in the cell membrane. The protein is CASP-like protein 4U1 of Zea mays (Maize).